The primary structure comprises 444 residues: ATP-dependent protease ATPase subunit HslU (444 aa).

ATP is bound by residues Ile18 and 60-65 (GVGKTE). The interval 141–161 (DAWGNNEEGDNDSGTRQSFRK) is disordered. ATP-binding residues include Asp257, Glu322, and Arg394.

It belongs to the ClpX chaperone family. HslU subfamily. As to quaternary structure, a double ring-shaped homohexamer of HslV is capped on each side by a ring-shaped HslU homohexamer. The assembly of the HslU/HslV complex is dependent on binding of ATP.

Its subcellular location is the cytoplasm. Functionally, ATPase subunit of a proteasome-like degradation complex; this subunit has chaperone activity. The binding of ATP and its subsequent hydrolysis by HslU are essential for unfolding of protein substrates subsequently hydrolyzed by HslV. HslU recognizes the N-terminal part of its protein substrates and unfolds these before they are guided to HslV for hydrolysis. The protein is ATP-dependent protease ATPase subunit HslU of Aliivibrio fischeri (strain MJ11) (Vibrio fischeri).